The following is an 89-amino-acid chain: Class II hydrophobin 2 (89 aa).

The signal sequence occupies residues 1–15 (MKLYIAAALLTLGLA). 4 disulfide bridges follow: cysteine 34-cysteine 74, cysteine 45-cysteine 66, cysteine 46-cysteine 58, and cysteine 75-cysteine 86.

It belongs to the cerato-ulmin hydrophobin family. In terms of assembly, homodimer. Homodimers further self-assemble to form highly ordered films at water-air interfaces through intermolecular interactions.

Its subcellular location is the secreted. The protein localises to the cell wall. In terms of biological role, aerial growth, conidiation, and dispersal of filamentous fungi in the environment rely upon a capability of their secreting small amphipathic proteins called hydrophobins (HPBs) with low sequence identity. Class I can self-assemble into an outermost layer of rodlet bundles on aerial cell surfaces, conferring cellular hydrophobicity that supports fungal growth, development and dispersal; whereas Class II form highly ordered films at water-air interfaces through intermolecular interactions but contribute nothing to the rodlet structure. The protein is Class II hydrophobin 2 of Trichoderma asperellum (strain ATCC 204424 / CBS 433.97 / NBRC 101777).